We begin with the raw amino-acid sequence, 259 residues long: 5'-nucleotidase SurE (259 aa).

Positions 8, 9, 40, and 92 each coordinate a divalent metal cation.

Belongs to the SurE nucleotidase family. The cofactor is a divalent metal cation.

The protein localises to the cytoplasm. The enzyme catalyses a ribonucleoside 5'-phosphate + H2O = a ribonucleoside + phosphate. In terms of biological role, nucleotidase that shows phosphatase activity on nucleoside 5'-monophosphates. This Xanthomonas axonopodis pv. citri (strain 306) protein is 5'-nucleotidase SurE.